We begin with the raw amino-acid sequence, 152 residues long: Type-1 angiotensin II receptor-associated protein (152 aa).

The Extracellular segment spans residues 1–23 (MELPAVNLKVILLGHWLLTTWGC). The chain crosses the membrane as a helical span at residues 24–44 (IVFSGSYAWANFTILALGVWA). Residues 45–55 (VAQRDSIDAIS) are Cytoplasmic-facing. A helical membrane pass occupies residues 56-76 (MFLGGLLATIFLDIVHISIFY). Residues 77–86 (PRAGLTDTGR) are Extracellular-facing. Residues 87 to 107 (FGAGMAILSLLLKPLSCCFVY) form a helical membrane-spanning segment. Residues 108-152 (HMYRQRGGFLGSSQDRSAYQTIDSAEAPANAFAVPEGRGQDARGY) are Cytoplasmic-facing. Ser119 and Ser120 each carry phosphoserine. Position 128 is a phosphothreonine (Thr128). Ser131 bears the Phosphoserine mark.

In terms of assembly, interacts with RACK1, and with the carboxy-terminal region of AGTR1.

It is found in the endoplasmic reticulum membrane. It localises to the golgi apparatus membrane. The protein localises to the cytoplasmic vesicle membrane. Appears to be a negative regulator of type-1 angiotensin II receptor-mediated signaling by regulating receptor internalization as well as mechanism of receptor desensitization such as phosphorylation. Also induces a decrease in cell proliferation and angiotensin II-stimulated transcriptional activity. This Pongo abelii (Sumatran orangutan) protein is Type-1 angiotensin II receptor-associated protein (AGTRAP).